The sequence spans 221 residues: Intraflagellar transport-associated protein (221 aa).

Ser-59 bears the Phosphoserine mark.

In terms of assembly, interacts with IFT122; the interaction associates IFTAP with IFT-A complex.

Seems to play a role in ciliary BBSome localization, maybe through interaction with IFT-A complex. The protein is Intraflagellar transport-associated protein of Homo sapiens (Human).